The primary structure comprises 344 residues: tRNA N6-adenosine threonylcarbamoyltransferase (344 aa).

Fe cation is bound by residues His-119 and His-123. Residues Val-141–Gly-145, Asp-174, Gly-187, Asp-191, and Asn-280 contribute to the substrate site. Residue Asp-310 participates in Fe cation binding.

It belongs to the KAE1 / TsaD family. It depends on Fe(2+) as a cofactor.

The protein resides in the cytoplasm. It catalyses the reaction L-threonylcarbamoyladenylate + adenosine(37) in tRNA = N(6)-L-threonylcarbamoyladenosine(37) in tRNA + AMP + H(+). Its function is as follows. Required for the formation of a threonylcarbamoyl group on adenosine at position 37 (t(6)A37) in tRNAs that read codons beginning with adenine. Is involved in the transfer of the threonylcarbamoyl moiety of threonylcarbamoyl-AMP (TC-AMP) to the N6 group of A37, together with TsaE and TsaB. TsaD likely plays a direct catalytic role in this reaction. The protein is tRNA N6-adenosine threonylcarbamoyltransferase of Listeria monocytogenes serovar 1/2a (strain ATCC BAA-679 / EGD-e).